A 211-amino-acid chain; its full sequence is V-type ATP synthase subunit D (211 aa).

Belongs to the V-ATPase D subunit family.

Produces ATP from ADP in the presence of a proton gradient across the membrane. The polypeptide is V-type ATP synthase subunit D (Fusobacterium nucleatum subsp. nucleatum (strain ATCC 25586 / DSM 15643 / BCRC 10681 / CIP 101130 / JCM 8532 / KCTC 2640 / LMG 13131 / VPI 4355)).